The primary structure comprises 168 residues: Ribosome maturation factor RimM (168 aa).

The 75-residue stretch at 92 to 166 (EDTFYKADLI…RITVDPIEGM (75 aa)) folds into the PRC barrel domain.

It belongs to the RimM family. As to quaternary structure, binds ribosomal protein uS19.

The protein localises to the cytoplasm. Functionally, an accessory protein needed during the final step in the assembly of 30S ribosomal subunit, possibly for assembly of the head region. Essential for efficient processing of 16S rRNA. May be needed both before and after RbfA during the maturation of 16S rRNA. It has affinity for free ribosomal 30S subunits but not for 70S ribosomes. The chain is Ribosome maturation factor RimM from Alkaliphilus metalliredigens (strain QYMF).